The chain runs to 514 residues: 23S rRNA (uracil(1939)-C(5))-methyltransferase RlmD (514 aa).

Cys-70, Cys-76, Cys-79, and Cys-158 together coordinate [4Fe-4S] cluster. The S-adenosyl-L-methionine site is built by Gln-272, Phe-301, Asn-306, Glu-322, Asn-350, and Asp-371. Cys-398 (nucleophile) is an active-site residue.

The protein belongs to the class I-like SAM-binding methyltransferase superfamily. RNA M5U methyltransferase family. RlmD subfamily.

The enzyme catalyses uridine(1939) in 23S rRNA + S-adenosyl-L-methionine = 5-methyluridine(1939) in 23S rRNA + S-adenosyl-L-homocysteine + H(+). Its function is as follows. Catalyzes the formation of 5-methyl-uridine at position 1939 (m5U1939) in 23S rRNA. In Chromobacterium violaceum (strain ATCC 12472 / DSM 30191 / JCM 1249 / CCUG 213 / NBRC 12614 / NCIMB 9131 / NCTC 9757 / MK), this protein is 23S rRNA (uracil(1939)-C(5))-methyltransferase RlmD.